A 119-amino-acid polypeptide reads, in one-letter code: Ribonuclease P protein component (119 aa).

Belongs to the RnpA family. In terms of assembly, consists of a catalytic RNA component (M1 or rnpB) and a protein subunit.

It catalyses the reaction Endonucleolytic cleavage of RNA, removing 5'-extranucleotides from tRNA precursor.. Its function is as follows. RNaseP catalyzes the removal of the 5'-leader sequence from pre-tRNA to produce the mature 5'-terminus. It can also cleave other RNA substrates such as 4.5S RNA. The protein component plays an auxiliary but essential role in vivo by binding to the 5'-leader sequence and broadening the substrate specificity of the ribozyme. In Pasteurella multocida (strain Pm70), this protein is Ribonuclease P protein component.